The primary structure comprises 496 residues: Mothers against decapentaplegic homolog 6 (496 aa).

The span at 1-15 (MFRSKRSGLVRRLWR) shows a compositional bias: basic residues. Disordered stretches follow at residues 1–116 (MFRS…PGWL) and 136–156 (GAPR…AGGG). Arg75 and Arg82 each carry dimethylated arginine; alternate. 2 positions are modified to omega-N-methylarginine; alternate: Arg75 and Arg82. An MH1 domain is found at 148–275 (AALEPAGGGR…FSRLCGPESP (128 aa)). Residue Lys173 forms a Glycyl lysine isopeptide (Lys-Gly) (interchain with G-Cter in ubiquitin) linkage. Zn(2+) is bound by residues Cys205, Cys247, Cys260, and His265. The MH2 domain maps to 331 to 496 (WCSVAYWEHR…WLEILLNNPR (166 aa)). The residue at position 435 (Ser435) is a Phosphoserine; by PRKX; in vitro.

Belongs to the dwarfin/SMAD family. As to quaternary structure, interacts with NEDD4L. Interacts with WWP1. Interacts with STAMBP and PRKX. Interacts with RNF111 and AXIN1. Interacts with TGF-beta type I receptor superfamily members, including ACVR1B, BMPR1B and TGFBR1. In response to BMP2, but not to TGFB treatment, interacts with SMAD1, but not with SMAD2, nor with SMAD4; this interaction may inhibit SMAD1 binding to SMAD4. Interacts with HOXC8 and HOXC9. Interacts with PELI1; this interaction interferes with PELI1 complex formation with TRAF6, IRAK1, IRAK4 and MYD88 in response to IL1B and hence negatively regulates IL1R-TLR signaling. Interacts with TSC22D1/TSC-22. Post-translationally, phosphorylated by BMP type 1 receptor kinase and by PRKX. In terms of processing, monoubiquitinated at Lys-173 by the E2/E3 hybrid ubiquitin-protein ligase UBE2O, leading to reduced binding affinity for the activated BMP type I receptor ACVR1/ALK2, thereby enhancing BMP7 and regulating adipocyte differentiation. Ubiquitinated by WWP1. Ubiquitinated by ARK2C, promoting proteasomal degradation, leading to enhance the BMP-Smad signaling. Arginine methylation by PRMT1, which is recruited by BMPR2, initiates BMP-Induced signaling and induces dissociation from the BMPR1B receptor at the cell surface leading to derepress downstream Smad1/Smad5 signaling. Expressed in the brain, heart, ovary, peripheral blood leukocytes, small intestine, spleen, thymus, bone marrow, fetal liver and lymph nodes.

The protein resides in the nucleus. Functionally, transforming growth factor-beta superfamily receptors signaling occurs through the Smad family of intracellular mediators. SMAD6 is an inhibitory Smad (i-Smad) that negatively regulates signaling downstream of type I transforming growth factor-beta. Acts as a mediator of TGF-beta and BMP anti-inflammatory activities. Suppresses IL1R-TLR signaling through its direct interaction with PEL1, preventing NF-kappa-B activation, nuclear transport and NF-kappa-B-mediated expression of pro-inflammatory genes. Blocks the BMP-SMAD1 signaling pathway by competing with SMAD4 for receptor-activated SMAD1-binding. Binds to regulatory elements in target promoter regions. In Homo sapiens (Human), this protein is Mothers against decapentaplegic homolog 6 (SMAD6).